Here is a 1631-residue protein sequence, read N- to C-terminus: ABC transporter A family member 6 (1631 aa).

Helical transmembrane passes span 25–45 (ICCE…ILAL), 242–262 (SVFI…DVVI), 285–305 (SWII…VVIF), 317–337 (GIVI…SFIF), 346–366 (FCGL…IFVS), 372–392 (VSVK…SIYI), and 416–436 (ILML…FEKV). Residues 491–724 (ISIRNLRKEF…FGQGYLLTCN (234 aa)) enclose the ABC transporter 1 domain. An ATP-binding site is contributed by 527-534 (GPNGCGKS). The next 7 helical transmembrane spans lie at 866–886 (SFFL…ILYK), 1047–1067 (AIIY…GSFA), 1099–1119 (WDFF…AGVI), 1127–1147 (FGSF…LGYL), 1158–1178 (AVGA…IASL), 1198–1218 (IIDL…IVFI), and 1242–1262 (LGTP…WILL). The 236-residue stretch at 1309-1544 (IQFKNLHKLF…FGAGYSIDVK (236 aa)) folds into the ABC transporter 2 domain. 1347–1354 (GLNGGGKS) is a binding site for ATP.

This sequence belongs to the ABC transporter superfamily. ABCA family.

The protein localises to the membrane. The sequence is that of ABC transporter A family member 6 (abcA6) from Dictyostelium discoideum (Social amoeba).